The chain runs to 247 residues: MSILFIADVHLCNTKPKIIHGFLNFLYNHAMQAQALYILGDLFEVWLGDDEKNIMHMTIAKGLQSLHKKKVPCYFIRGNHDFLLGPKYANLCDMILLPDSQVLKLPSGKNVVILHGDTLCIDDKSYQRLRNFLHCQILQKIFLSLPLSMRLYIFNCARTFCIKYKKYKLKQNLHIKLQTVIDMLIKNQSKILIHGHTHQPAIHNIQISENISFKRIVLGQWNKYGSVATINEKNDDINLIHFPLNKQ.

Residues D8, H10, D41, N79, and H115 each coordinate Mn(2+). 79–80 (NH) contributes to the substrate binding site. Positions 123, 165, 168, and 196 each coordinate substrate. Residues H196 and H198 each contribute to the Mn(2+) site.

The protein belongs to the LpxH family. The cofactor is Mn(2+).

It localises to the cell inner membrane. It catalyses the reaction UDP-2-N,3-O-bis[(3R)-3-hydroxytetradecanoyl]-alpha-D-glucosamine + H2O = 2-N,3-O-bis[(3R)-3-hydroxytetradecanoyl]-alpha-D-glucosaminyl 1-phosphate + UMP + 2 H(+). The protein operates within glycolipid biosynthesis; lipid IV(A) biosynthesis; lipid IV(A) from (3R)-3-hydroxytetradecanoyl-[acyl-carrier-protein] and UDP-N-acetyl-alpha-D-glucosamine: step 4/6. Its function is as follows. Hydrolyzes the pyrophosphate bond of UDP-2,3-diacylglucosamine to yield 2,3-diacylglucosamine 1-phosphate (lipid X) and UMP by catalyzing the attack of water at the alpha-P atom. Involved in the biosynthesis of lipid A, a phosphorylated glycolipid that anchors the lipopolysaccharide to the outer membrane of the cell. This chain is UDP-2,3-diacylglucosamine hydrolase, found in Blochmanniella floridana.